Here is a 62-residue protein sequence, read N- to C-terminus: Large ribosomal subunit protein bL28 (62 aa).

The protein belongs to the bacterial ribosomal protein bL28 family.

The protein is Large ribosomal subunit protein bL28 of Bacillus velezensis (strain DSM 23117 / BGSC 10A6 / LMG 26770 / FZB42) (Bacillus amyloliquefaciens subsp. plantarum).